The following is a 563-amino-acid chain: Arginine--tRNA ligase (563 aa).

The short motif at 121 to 131 is the 'HIGH' region element; sequence PNIAKPFSIGH.

The protein belongs to the class-I aminoacyl-tRNA synthetase family. In terms of assembly, monomer.

It localises to the cytoplasm. The catalysed reaction is tRNA(Arg) + L-arginine + ATP = L-arginyl-tRNA(Arg) + AMP + diphosphate. This chain is Arginine--tRNA ligase, found in Streptococcus pyogenes serotype M4 (strain MGAS10750).